A 950-amino-acid chain; its full sequence is A disintegrin and metalloproteinase with thrombospondin motifs 15 (950 aa).

The signal sequence occupies residues 1 to 17; sequence MLLLGILTLAFAGRTAG. The propeptide occupies 18 to 212; sequence GSEPEREVVV…SRRRSGRAKR (195 aa). Asparagine 141 carries N-linked (GlcNAc...) asparagine glycosylation. The segment at 151-172 is disordered; that stretch reads SQGAHLLQRRGVPGGPSGDPTS. The short motif at 172-179 is the Cysteine switch element; that stretch reads SRCGVASG. Cysteine 174 is a binding site for Zn(2+). The region spanning 218–427 is the Peptidase M12B domain; the sequence is RYVETLVVAD…GHGDCLLDQP (210 aa). Disulfide bonds link cysteine 293–cysteine 345, cysteine 322–cysteine 327, cysteine 339–cysteine 422, cysteine 377–cysteine 406, cysteine 448–cysteine 470, cysteine 459–cysteine 480, cysteine 465–cysteine 499, cysteine 493–cysteine 504, cysteine 528–cysteine 565, cysteine 532–cysteine 570, and cysteine 543–cysteine 555. Histidine 361 provides a ligand contact to Zn(2+). The active site involves glutamate 362. 2 residues coordinate Zn(2+): histidine 365 and histidine 371. The Disintegrin domain occupies 428–515; it reads SKPISLPEDL…ERHNLNKHRV (88 aa). The 56-residue stretch at 516–571 folds into the TSP type-1 1 domain; that stretch reads DGSWAKWDPYGPCSRTCGGGVQLARRQCTNPTPANGGKYCEGVRVKYRSCNLEPCP. Asparagine 591, asparagine 623, and asparagine 679 each carry an N-linked (GlcNAc...) asparagine glycan. The segment at 701–838 is spacer; sequence AIPAGASSID…SNQVEQPDDR (138 aa). The disordered stretch occupies residues 798 to 822; it reads FYLPKEPREDKSSHPKDPRGPSVLH. The segment covering 802–816 has biased composition (basic and acidic residues); the sequence is KEPREDKSSHPKDPR. TSP type-1 domains follow at residues 839-895 and 896-949; these read PPAR…EPCP and TWEL…VLRP.

Zn(2+) serves as cofactor. In terms of processing, the precursor is cleaved by a furin endopeptidase. Glycosylated. Can be O-fucosylated by POFUT2 on a serine or a threonine residue found within the consensus sequence C1-X(2)-(S/T)-C2-G of the TSP type-1 repeat domains where C1 and C2 are the first and second cysteine residue of the repeat, respectively. Fucosylated repeats can then be further glycosylated by the addition of a beta-1,3-glucose residue by the glucosyltransferase, B3GALTL. Fucosylation mediates the efficient secretion of ADAMTS family members. Can be C-glycosylated with one or two mannose molecules on tryptophan residues within the consensus sequence W-X-X-W of the TPRs. Also N-glycosylated. These other glycosylations can also facilitate secretion. Expressed in fetal liver and kidney, but not in any of the adult tissues examined.

Its subcellular location is the secreted. The protein resides in the extracellular space. It is found in the extracellular matrix. It localises to the cell surface. In terms of biological role, metalloprotease which has proteolytic activity against the proteoglycan VCAN, cleaving it at the 'Glu-1428-|-1429-Ala' site. Cleaves VCAN in the pericellular matrix surrounding myoblasts, facilitating myoblast contact and fusion which is required for skeletal muscle development and regeneration. In Homo sapiens (Human), this protein is A disintegrin and metalloproteinase with thrombospondin motifs 15 (ADAMTS15).